Consider the following 220-residue polypeptide: Putative glutathione S-transferase C460.02c (220 aa).

The 81-residue stretch at 1–81 folds into the GST N-terminal domain; sequence MFLGTIYSFK…YFYEKGKHND (81 aa). The region spanning 89–216 is the GST C-terminal domain; the sequence is NEIEEAEMLK…YPLELPLTVT (128 aa).

The protein belongs to the GST superfamily.

It localises to the cytoplasm. The catalysed reaction is RX + glutathione = an S-substituted glutathione + a halide anion + H(+). Involved in the oxidative stress response and detoxification. This chain is Putative glutathione S-transferase C460.02c, found in Schizosaccharomyces pombe (strain 972 / ATCC 24843) (Fission yeast).